The following is a 204-amino-acid chain: Serotype 3 fimbrial subunit (204 aa).

Positions 1 to 25 (MSKFSYPALRAALILAASPVLPALA) are cleaved as a signal peptide. Cysteines 41 and 84 form a disulfide.

Belongs to the fimbrial protein family.

It localises to the fimbrium. Bordetella pertussis is the causative agent of whooping cough. An essential step in the disease process is the attachment of the bacteria to the ciliated epithelium of the respiratory tract, enabling the organism to resist normal host-clearance mechanisms. It is unclear which bacterial cell surface component are responsible for adherence but the fimbriae of B.pertussis are prime candidates for being involved in this process. In Bordetella pertussis (strain Tohama I / ATCC BAA-589 / NCTC 13251), this protein is Serotype 3 fimbrial subunit (fim3).